The sequence spans 219 residues: C-8 sterol isomerase erg2 (219 aa).

The helical transmembrane segment at Met1 to Ile21 threads the bilayer.

Belongs to the ERG2 family.

Its subcellular location is the endoplasmic reticulum membrane. It carries out the reaction fecosterol = episterol. It participates in steroid metabolism; ergosterol biosynthesis. Functionally, C-8 sterol isomerase; part of the third module of ergosterol biosynthesis pathway that includes by the late steps of the pathway. Erg2 catalyzes the reaction which results in unsaturation at C-7 in the B ring of sterols and thus converts fecosterol to episterol. The third module or late pathway involves the ergosterol synthesis itself through consecutive reactions that mainly occur in the endoplasmic reticulum (ER) membrane. Firstly, the squalene synthase erg9 catalyzes the condensation of 2 farnesyl pyrophosphate moieties to form squalene, which is the precursor of all steroids. Secondly, squalene is converted into lanosterol by the consecutive action of the squalene epoxidase erg1 and the lanosterol synthase erg7. The lanosterol 14-alpha-demethylase erg11/cyp1 catalyzes C14-demethylation of lanosterol to produce 4,4'-dimethyl cholesta-8,14,24-triene-3-beta-ol. In the next steps, a complex process involving various demethylation, reduction and desaturation reactions catalyzed by the C-14 reductase erg24 and the C-4 demethylation complex erg25-erg26-erg27 leads to the production of zymosterol. Erg28 likely functions in the C-4 demethylation complex reaction by tethering erg26 and Erg27 to the endoplasmic reticulum or to facilitate interaction between these proteins. Then, the sterol 24-C-methyltransferase erg6 catalyzes the methyl transfer from S-adenosyl-methionine to the C-24 of zymosterol to form fecosterol. The C-8 sterol isomerase erg2 catalyzes the reaction which results in unsaturation at C-7 in the B ring of sterols and thus converts fecosterol to episterol. The sterol-C5-desaturases erg31 and erg32 then catalyze the introduction of a C-5 double bond in the B ring to produce 5-dehydroepisterol. The C-22 sterol desaturase erg5 further converts 5-dehydroepisterol into ergosta-5,7,22,24(28)-tetraen-3beta-ol by forming the C-22(23) double bond in the sterol side chain. Finally, ergosta-5,7,22,24(28)-tetraen-3beta-ol is substrate of the C-24(28) sterol reductase erg4 to produce ergosterol. In the genus Schizosaccharomyces, a second route exists between lanosterol and fecosterol, via the methylation of lanosterol to eburicol by erg6, followed by C14-demethylation by erg11/cyp1 and C4-demethylation by the demethylation complex erg25-erg26-erg27. The protein is C-8 sterol isomerase erg2 of Schizosaccharomyces pombe (strain 972 / ATCC 24843) (Fission yeast).